The following is a 251-amino-acid chain: NADPH-dependent oxidoreductase (251 aa).

Belongs to the flavin oxidoreductase frp family. The cofactor is FMN.

Reduces FMN, organic nitro compounds and disulfide DTNB. Involved in maintenance of the cellular redox state and the disulfide stress response. The sequence is that of NADPH-dependent oxidoreductase (nfrA) from Staphylococcus aureus (strain USA300).